The primary structure comprises 65 residues: Vespid chemotactic peptide 5h (65 aa).

Positions 1–23 are cleaved as a signal peptide; that stretch reads MKYNIVFLFAIIASLACLQLTFA. AXPX repeat units lie at residues 23–26, 27–30, 31–34, 35–38, 39–42, 43–46, and 47–50; these read AAPA, ASPL, ANPG, ASPD, AAPN, ADPL, and ADPF. Residues 24-49 constitute a propeptide that is removed on maturation; that stretch reads APAASPLANPGASPDAAPNADPLADP. The residue at position 62 (leucine 62) is a Leucine amide.

This sequence belongs to the MCD family. Crabrolin subfamily. Expressed by the venom gland.

It is found in the secreted. Its function is as follows. Shows antimicrobial activity against the Gram-negative bacteria E.coli ATCC 25922 (MIC=30 ug/ml), the Gram-positive bacteria S.aureus ATCC 2592 (MIC=5 ug/ml) and the fungus C.albicans ATCC 2002 (MIC=25 ug/ml). Acts as a mast cell degranulating peptide. Its mast cell degranulation activity may be related to the activation of G-protein coupled receptors in mast cells as well as interaction with other proteins located in cell endosomal membranes in the mast cells. Induces the chemotaxis of neutrophils. The polypeptide is Vespid chemotactic peptide 5h (Vespa magnifica (Hornet)).